The sequence spans 512 residues: Cytochrome P450 72A13 (512 aa).

Residues 2–22 traverse the membrane as a helical segment; it reads EISVASVTVSVAVVVVSWWVW. Cysteine 460 is a binding site for heme.

This sequence belongs to the cytochrome P450 family. It depends on heme as a cofactor.

The protein resides in the membrane. This Arabidopsis thaliana (Mouse-ear cress) protein is Cytochrome P450 72A13 (CYP72A13).